A 976-amino-acid chain; its full sequence is Chloride channel protein 1 (976 aa).

At 1–118 (MQPSQSLRRG…VVRRKLGEDW (118 aa)) the chain is on the cytoplasmic side. Positions 71–92 (DKEQDTGMSKKMGSSESMDSKD) are disordered. Low complexity predominate over residues 77–87 (GMSKKMGSSES). Residues 119–150 (IFLVLLGLLMALVSWSMDYVSAKSLQAYKWSY) form a helical membrane-spanning segment. Topologically, residues 151 to 158 (YQMQPNLP) are extracellular. A helical membrane pass occupies residues 159-179 (LQYLVWVTFPLTLILFSAVFC). Topologically, residues 180–183 (HLIS) are cytoplasmic. Residues 184–189 (PQAVGS) constitute an intramembrane region (note=Loop between two helices). A Selectivity filter part_1 motif is present at residues 188-192 (GSGIP). Ser-189 is a binding site for chloride. The helical intramembrane region spans 190-195 (GIPEMK). Topologically, residues 196 to 208 (TILRGVILKEYLT) are cytoplasmic. The segment at residues 209 to 224 (LKAFVAKVVALTAGLG) is an intramembrane region (helical). The note=Loop between two helices intramembrane region spans 225–230 (SGIPVG). A Selectivity filter part_2 motif is present at residues 230–234 (GKEGP). Positions 231–246 (KEGPFVHIASICAAVL) form an intramembrane region, helical. At 247-268 (SKFMSMFCGVYEQPYYYTDMLT) the chain is on the cytoplasmic side. 2 consecutive intramembrane regions (helical) follow at residues 269 to 280 (VGCAVGVGCCFG) and 281 to 290 (TPLGGVLFSI). Residues 291-301 (EVTSTYFAVRN) are Cytoplasmic-facing. Residues 302-321 (YWRGFFAATFSAFVFRVLAV) form a helical membrane-spanning segment. The Extracellular segment spans residues 322-347 (WNKDAVTITALFRTNFRMDFPFDLQE). The helical transmembrane segment at 348-376 (LPAFAIIGICCGFLGAVFVYLHRQVMLGV) threads the bilayer. Residues 377–390 (RKHKALSQFLAKHR) are Cytoplasmic-facing. A helical membrane pass occupies residues 391–408 (LLYPGIVTFIIASFTFPP). At 409-414 (GIGQFM) the chain is on the extracellular side. Residues 415–418 (AGEL) constitute an intramembrane region (note=Loop between two helices). Residues 419–426 (MPREAIST) constitute an intramembrane region (helical). Topologically, residues 427 to 457 (LFDNNTWVKHVGDPESLGRSAVWIHPRVNVI) are extracellular. An intramembrane region (helical) is located at residues 458–475 (IIIFLFFIMKFWMSIVAT). Residues 476–482 (TMPIPCG) constitute an intramembrane region (note=Loop between two helices). The Selectivity filter part_3 motif lies at 482–486 (GGFMP). Residues 483 to 498 (GFMPVFVLGAAFGRLV) constitute an intramembrane region (helical). Chloride is bound at residue Phe-484. Residues 499–521 (GEIMAMLFPDGILFDDIIYKILP) are Extracellular-facing. Positions 522–538 (GGYAVIGAAALTGAVSH) form an intramembrane region, helical. Positions 539-540 (TV) form an intramembrane region, note=Loop between two helices. Positions 541–554 (STAVICFELTGQIA) form an intramembrane region, helical. At 555-557 (HIL) the chain is on the extracellular side. An intramembrane region (helical) is located at residues 558–571 (PMMVAVILANMVAQ). An intramembrane region (note=Loop between two helices) is located at residues 572–575 (SLQP). Residues 576-578 (SLY) constitute an intramembrane region (helical). Tyr-578 is a chloride binding site. The Cytoplasmic segment spans residues 579-976 (DSIIQVKKLP…DEEDEDELIL (398 aa)). In terms of domain architecture, CBS 1 spans 609-668 (MVRDVKFVSATCTYGELRTLLQTTTVKTLPLVDSKDSMILLGSVERSELQSLLQRHLGPE). A disordered region spans residues 707–759 (DEDEDEDLSGKPELPPLPPPHPLPSAPLSSEESNGPLPSHKQQPEAPEPADQR). Residues 719–731 (ELPPLPPPHPLPS) show a composition bias toward pro residues. A CBS 2 domain is found at 816-871 (IDQSPFQLVEQTSLHKTHTLFSLLGLHLAYVTSMGKLRGVLALEELQKAIEGHTKS). A disordered region spans residues 872–976 (GVQLRPPLAS…DEEDEDELIL (105 aa)). Residue Ser-881 is modified to Phosphoserine. The segment covering 914–925 (SPEPPAPSPSPA) has biased composition (pro residues). Composition is skewed to acidic residues over residues 938-955 (ELEELELGESPGLEEELA) and 967-976 (DEEDEDELIL).

This sequence belongs to the chloride channel (TC 2.A.49) family. ClC-1/CLCN1 subfamily. In terms of assembly, homodimer.

It localises to the cell membrane. The protein resides in the sarcolemma. It is found in the T-tubule. The catalysed reaction is chloride(in) = chloride(out). It catalyses the reaction thiocyanate(in) = thiocyanate(out). The enzyme catalyses bromide(in) = bromide(out). It carries out the reaction nitrate(in) = nitrate(out). The catalysed reaction is iodide(out) = iodide(in). Its activity is regulated as follows. Modulated by membrane voltage with depolarization favouring channel opening and hyperpolarization favouring channel closure. Inhibited by acidic pH and ATP binding due to a shift of voltage dependence of common gating to more positive voltages. Inhibited by 9-anthracene-carboxylic. Functionally, voltage-gated chloride channel involved in skeletal muscle excitability. Generates most of the plasma membrane chloride conductance in skeletal muscle fibers, stabilizes the resting membrane potential and contributes to the repolarization phase during action potential firing. Forms a homodimeric channel where each subunit has its own ion conduction pathway. Conducts double-barreled currents controlled by two types of gates, two fast glutamate gates that control each subunit independently and a slow common gate that opens and shuts off both subunits simultaneously. Has a significant open probability at muscle resting potential and is further activated upon membrane depolarization. Permeable to small monovalent anions with ion selectivity for chloride &gt; thiocyanate &gt; bromide &gt; nitrate &gt; iodide. In Canis lupus familiaris (Dog), this protein is Chloride channel protein 1 (CLCN1).